The chain runs to 105 residues: Cortistatin (105 aa).

A signal peptide spans 1–18 (MPLSPGLLLLLLSGATAT). Residues 19-74 (AALPLEGGPTGRDSEHMQEAAGIRKSSLLTFLAWWFEWTSQASAGPLIGEEAREVA) constitute a propeptide that is removed on maturation. C93 and C104 are disulfide-bonded.

Belongs to the somatostatin family. As to expression, expressed in a subset of GABAergic cells in the cortex and hippocampus.

Its subcellular location is the secreted. Functionally, binds to all human somatostatin receptor (SSTR) subtypes. It also inhibits cAMP production induced by forskolin through SSTRs. In Homo sapiens (Human), this protein is Cortistatin (CORT).